A 270-amino-acid polypeptide reads, in one-letter code: UPF0354 protein BPUM_2629 (270 aa).

Belongs to the UPF0354 family.

This Bacillus pumilus (strain SAFR-032) protein is UPF0354 protein BPUM_2629.